A 364-amino-acid chain; its full sequence is Developmentally-regulated GTP-binding protein 2 homolog (364 aa).

In terms of domain architecture, OBG-type G spans 63-288; sequence ARVALIGFPS…LLDKIWDYLN (226 aa). Residues 69-76, 115-119, and 246-249 each bind GTP; these read GFPSVGKS, DTPGI, and NKMD. In terms of domain architecture, TGS spans 288-363; that stretch reads NLVRVYTKLR…EDEDVIQIVK (76 aa).

Belongs to the TRAFAC class OBG-HflX-like GTPase superfamily. OBG GTPase family.

The protein is Developmentally-regulated GTP-binding protein 2 homolog (drg2) of Dictyostelium discoideum (Social amoeba).